The following is a 307-amino-acid chain: Putative lipid kinase SERP0390 (307 aa).

Residues Gln3–Tyr139 form the DAGKc domain. ATP contacts are provided by residues Ser44, Gly74 to Glu80, and Thr101. Mg(2+) is bound by residues Ser220, Asp223, and Arg225. The Proton acceptor role is filled by Glu281.

This sequence belongs to the diacylglycerol/lipid kinase family. Mg(2+) serves as cofactor.

Functionally, may catalyze the ATP-dependent phosphorylation of lipids other than diacylglycerol (DAG). This is Putative lipid kinase SERP0390 from Staphylococcus epidermidis (strain ATCC 35984 / DSM 28319 / BCRC 17069 / CCUG 31568 / BM 3577 / RP62A).